Consider the following 377-residue polypeptide: S-adenosylmethionine decarboxylase proenzyme 2 (377 aa).

Active-site residues include E24 and E27. S84 functions as the Schiff-base intermediate with substrate; via pyruvic acid in the catalytic mechanism. A Pyruvic acid (Ser); by autocatalysis modification is found at S84. The active-site Proton donor; for catalytic activity is C98. Residues S246 and H259 each act as proton acceptor; for processing activity in the active site.

It belongs to the eukaryotic AdoMetDC family. The cofactor is pyruvate. In terms of processing, is synthesized initially as an inactive proenzyme. Formation of the active enzyme involves a self-maturation process in which the active site pyruvoyl group is generated from an internal serine residue via an autocatalytic post-translational modification. Two non-identical subunits are generated from the proenzyme in this reaction, and the pyruvate is formed at the N-terminus of the alpha chain, which is derived from the carboxyl end of the proenzyme. The post-translation cleavage follows an unusual pathway, termed non-hydrolytic serinolysis, in which the side chain hydroxyl group of the serine supplies its oxygen atom to form the C-terminus of the beta chain, while the remainder of the serine residue undergoes an oxidative deamination to produce ammonia and the pyruvoyl group blocking the N-terminus of the alpha chain.

It catalyses the reaction S-adenosyl-L-methionine + H(+) = S-adenosyl 3-(methylsulfanyl)propylamine + CO2. The protein operates within amine and polyamine biosynthesis; S-adenosylmethioninamine biosynthesis; S-adenosylmethioninamine from S-adenosyl-L-methionine: step 1/1. This chain is S-adenosylmethionine decarboxylase proenzyme 2 (SAMDC2), found in Dianthus caryophyllus (Carnation).